The sequence spans 224 residues: Glutathione S-transferase D7 (224 aa).

Residues 2–83 form the GST N-terminal domain; the sequence is PNLDLYNFPM…YLVEKYGKPD (82 aa). Residues 53–55 and 67–69 contribute to the glutathione site; these read HTI and ESR. The GST C-terminal domain maps to 90–210; sequence DPQKRALINQ…LESLQQGKKF (121 aa).

This sequence belongs to the GST superfamily. Delta family. As to quaternary structure, homodimer.

The catalysed reaction is RX + glutathione = an S-substituted glutathione + a halide anion + H(+). Conjugation of reduced glutathione to a wide number of exogenous and endogenous hydrophobic electrophiles. May be involved in detoxification. This chain is Glutathione S-transferase D7, found in Drosophila melanogaster (Fruit fly).